The chain runs to 52 residues: Large ribosomal subunit protein bL33 (52 aa).

This sequence belongs to the bacterial ribosomal protein bL33 family.

In Chlamydia muridarum (strain MoPn / Nigg), this protein is Large ribosomal subunit protein bL33 (rpmG).